The following is a 342-amino-acid chain: Phenylalanine--tRNA ligase alpha subunit (342 aa).

A Mg(2+)-binding site is contributed by E255.

This sequence belongs to the class-II aminoacyl-tRNA synthetase family. Phe-tRNA synthetase alpha subunit type 1 subfamily. Tetramer of two alpha and two beta subunits. Requires Mg(2+) as cofactor.

Its subcellular location is the cytoplasm. It catalyses the reaction tRNA(Phe) + L-phenylalanine + ATP = L-phenylalanyl-tRNA(Phe) + AMP + diphosphate + H(+). The sequence is that of Phenylalanine--tRNA ligase alpha subunit from Pelotomaculum thermopropionicum (strain DSM 13744 / JCM 10971 / SI).